A 364-amino-acid chain; its full sequence is MPEVQRMTLTQFLIEQRRRYPDASGGFNGLILNVAMACKEIARAVAFGALGGLHGRAGGPDAAGAAINVQGEVQQKLDVLSNDTFLRVNEWGGYLAGMASEEMEAPYQIPAHYPRGKYLLVFDPLDGSSNIDVNVSVGSIFSVLRAPEGTADVTEQAFLQPGTAQVAAGYALYGPTTMLVLTVGNGVNGFTLDPNLGEFFLTHPDLRVPADTREFAINASNSRFWEAPIRQYVSECLAGQTGPRGKDFNMRWIASMVAEAHRILMRGGVFMYPRDTKDPARPGRLRLLYEANPIAFLMEQAGGRASTGRQALMSVAPNALHQRIGVIFGSRHEVERIERYHNEQTDPDLPNPLFNERSLFRASA.

Residues Glu-101, Asp-123, Leu-125, and Asp-126 each contribute to the Mg(2+) site. Substrate contacts are provided by residues 126–129 (DGSS) and Asn-218. Residue Glu-290 coordinates Mg(2+).

The protein belongs to the FBPase class 1 family. As to quaternary structure, homotetramer. It depends on Mg(2+) as a cofactor.

It is found in the cytoplasm. The catalysed reaction is beta-D-fructose 1,6-bisphosphate + H2O = beta-D-fructose 6-phosphate + phosphate. The protein operates within carbohydrate biosynthesis; gluconeogenesis. This chain is Fructose-1,6-bisphosphatase class 1 2, found in Cupriavidus taiwanensis (strain DSM 17343 / BCRC 17206 / CCUG 44338 / CIP 107171 / LMG 19424 / R1) (Ralstonia taiwanensis (strain LMG 19424)).